Consider the following 219-residue polypeptide: Large ribosomal subunit protein uL1 (219 aa).

It belongs to the universal ribosomal protein uL1 family. In terms of assembly, component of the large ribosomal subunit.

Its subcellular location is the cytoplasm. This chain is Large ribosomal subunit protein uL1 (RPL1), found in Encephalitozoon cuniculi (strain GB-M1) (Microsporidian parasite).